The sequence spans 437 residues: Transmembrane protein with metallophosphoesterase domain (437 aa).

The next 5 helical transmembrane spans lie at 7-27, 41-61, 87-107, 116-136, and 164-184; these read LSAE…MLIS, ALLF…LGSL, IIVL…FFLV, LLSF…FVFG, and VLAL…AAQP. A divalent metal cation contacts are provided by D211, H213, D243, N274, H376, and H378.

This sequence belongs to the metallophosphoesterase superfamily. LOC643853 family. A divalent metal cation serves as cofactor.

It localises to the membrane. This chain is Transmembrane protein with metallophosphoesterase domain (tmppe), found in Danio rerio (Zebrafish).